A 176-amino-acid polypeptide reads, in one-letter code: MGALAARRCVEWLLGLYFVSHIPITLFIDLQAVLPPELYPQEFSNLLRWYSKEFKDPLMQEPPVWFKSFLLCELVFQLPFFPIAAYAFFKGSCRWIRIPAIIYAAHTITTLIPILYTLLFEDFSKAVAFKGQRPESFRERLTLVGVYAPYLIIPLILLLFMLRNPYYKYEEKRKKK.

Topologically, residues 1 to 9 are cytoplasmic; it reads MGALAARRC. Residues 10-30 form a helical membrane-spanning segment; sequence VEWLLGLYFVSHIPITLFIDL. The EXPERA domain maps to 10–158; it reads VEWLLGLYFV…PYLIIPLILL (149 aa). The Lumenal segment spans residues 31 to 68; it reads QAVLPPELYPQEFSNLLRWYSKEFKDPLMQEPPVWFKS. The helical transmembrane segment at 69–89 threads the bilayer; that stretch reads FLLCELVFQLPFFPIAAYAFF. Residues Val-75 and Gln-77 each contribute to the cholesterol site. Over 90-99 the chain is Cytoplasmic; it reads KGSCRWIRIP. A helical transmembrane segment spans residues 100–120; it reads AIIYAAHTITTLIPILYTLLF. The Lumenal segment spans residues 121-140; the sequence is EDFSKAVAFKGQRPESFRER. A helical membrane pass occupies residues 141-161; that stretch reads LTLVGVYAPYLIIPLILLLFM. At 162–176 the chain is on the cytoplasmic side; that stretch reads LRNPYYKYEEKRKKK. Residues 172–176 carry the ER retention motif motif; sequence KRKKK.

Belongs to the TMEM97/sigma-2 receptor family. In terms of assembly, homodimer. Interacts with NPC1; the interaction impairs NPC1-mediated cholesterol transport. Interacts with PGRMC1 and LDLR; the interaction increases LDL internalization. Interacts with histatin 1/HTN1; the interaction induces HTN1-stimulating wound healing. Interacts with TSPO.

Its subcellular location is the rough endoplasmic reticulum membrane. It is found in the nucleus membrane. Functionally, sigma-2 receptor which contributes to ameliorate dysfunctional cellular processes and slow degenerative progression by regulating cell functions including cholesterol biosynthesis/trafficking, membrane trafficking, autophagy, lipid membrane-bound protein trafficking, and receptor stabilization at the cell surface. Forms a ternary complex with PGRMC1 receptor and low density lipoprotein receptor/LDLR at the plasma membrane, which increases LDLR-mediated LDL cholesterol internalization. Decreases lysosomal sterol transporter NPC1 availability to the cell, probably through NPC1-binding, hence controlling lipid transport, including cholesterol and LBPA, outside of late endosome/lysosome. Binds regio- and stereoselective ligand 20(S)-hydroxycholesterol (20(S)-OHC) which enhances TMEM97-NPC1 interaction and decreases TMEM97-PGRMC1 and TMEM97-TSPO interactions, thereby linking OHC binding to cholesterol homeostasis. Also able to bind cholesterol. Binds histatin 1 (Hst 1)/HN1 salivary peptide at the ER membrane, which is critical for increasing mitochondria-ER contacts and stimulating Hst1 wound healing properties. May alter the activity of some cytochrome P450 proteins. Although shows homologies with sterol isomerases (EXPERA domain), not able to catalyze sterol isomerization. However, may act as sensors of these molecules. Acts as a quality control factor in the ER, promoting the proteolytic degradation of nonproductive and extramitochondrial precursor proteins in the ER membrane thus removing them from the ER surface. In Mus musculus (Mouse), this protein is Sigma intracellular receptor 2.